The following is a 46-amino-acid chain: MAKGKRTFQPNNRRRARVHGFRLRMRNSGRAIVSGRRRKGRRALSA.

This sequence belongs to the bacterial ribosomal protein bL34 family.

The protein is Large ribosomal subunit protein bL34 (rpmH) of Mycobacterium avium.